We begin with the raw amino-acid sequence, 127 residues long: Protein ApaG (127 aa).

Positions D3–H127 constitute an ApaG domain.

This chain is Protein ApaG, found in Xanthomonas oryzae pv. oryzae (strain MAFF 311018).